Consider the following 91-residue polypeptide: Small ribosomal subunit protein bS18 (91 aa).

This sequence belongs to the bacterial ribosomal protein bS18 family. Part of the 30S ribosomal subunit. Forms a tight heterodimer with protein bS6.

In terms of biological role, binds as a heterodimer with protein bS6 to the central domain of the 16S rRNA, where it helps stabilize the platform of the 30S subunit. In Wolbachia pipientis wMel, this protein is Small ribosomal subunit protein bS18.